A 155-amino-acid chain; its full sequence is Large ribosomal subunit protein eL24 (155 aa).

A compositionally biased stretch (basic and acidic residues) spans 98 to 129 (PEVRKAKRDDKAKADKEKKKADKAARKAEKAK). Residues 98–155 (PEVRKAKRDDKAKADKEKKKADKAARKAEKAKLAAAQGSKVSKQQAKGAFQKVAATSR) form a disordered region.

It belongs to the eukaryotic ribosomal protein eL24 family.

The sequence is that of Large ribosomal subunit protein eL24 (RPL24) from Candida glabrata (strain ATCC 2001 / BCRC 20586 / JCM 3761 / NBRC 0622 / NRRL Y-65 / CBS 138) (Yeast).